The chain runs to 431 residues: 3-phosphoshikimate 1-carboxyvinyltransferase (431 aa).

Residues Lys-20, Ser-21, and Arg-25 each coordinate 3-phosphoshikimate. Lys-20 contributes to the phosphoenolpyruvate binding site. Positions 91 and 119 each coordinate phosphoenolpyruvate. 3-phosphoshikimate contacts are provided by Ser-164, Gln-166, Asp-317, and Lys-344. Gln-166 lines the phosphoenolpyruvate pocket. Residue Asp-317 is the Proton acceptor of the active site. 2 residues coordinate phosphoenolpyruvate: Arg-348 and Arg-390.

This sequence belongs to the EPSP synthase family. As to quaternary structure, monomer.

The protein localises to the cytoplasm. It catalyses the reaction 3-phosphoshikimate + phosphoenolpyruvate = 5-O-(1-carboxyvinyl)-3-phosphoshikimate + phosphate. It participates in metabolic intermediate biosynthesis; chorismate biosynthesis; chorismate from D-erythrose 4-phosphate and phosphoenolpyruvate: step 6/7. Catalyzes the transfer of the enolpyruvyl moiety of phosphoenolpyruvate (PEP) to the 5-hydroxyl of shikimate-3-phosphate (S3P) to produce enolpyruvyl shikimate-3-phosphate and inorganic phosphate. This is 3-phosphoshikimate 1-carboxyvinyltransferase from Aquifex aeolicus (strain VF5).